The following is a 278-amino-acid chain: Large ribosomal subunit protein uL2 (278 aa).

The tract at residues 222–264 is disordered; that stretch reads GVAMNPIDHPHGGGEGRTSGGRHPVTPWGKPTKGRKTRKNKAT.

It belongs to the universal ribosomal protein uL2 family. Part of the 50S ribosomal subunit. Forms a bridge to the 30S subunit in the 70S ribosome.

One of the primary rRNA binding proteins. Required for association of the 30S and 50S subunits to form the 70S ribosome, for tRNA binding and peptide bond formation. It has been suggested to have peptidyltransferase activity; this is somewhat controversial. Makes several contacts with the 16S rRNA in the 70S ribosome. This Phenylobacterium zucineum (strain HLK1) protein is Large ribosomal subunit protein uL2.